The primary structure comprises 1793 residues: Protein TIC 214 (1793 aa).

The next 6 membrane-spanning stretches (helical) occupy residues 11-31 (LVSLCLKIINSVIVVGLYYGF), 64-84 (FITGQLVMFISIYYAPLHIAL), 90-112 (ITVITLPYLLLYFLGNNQKNFLN), 129-149 (IFFQNLFFQLLNPFFLPSSIL), 172-192 (VGWLIGHVFFMKWIGLMLVWI), and 222-242 (IFLIFFFITCLYYLGRIPPIY). The interval 1504 to 1524 (DIEEDYGESDSKKGGKDKNKK) is disordered.

Belongs to the TIC214 family. In terms of assembly, part of the Tic complex.

Its subcellular location is the plastid. The protein localises to the chloroplast inner membrane. Functionally, involved in protein precursor import into chloroplasts. May be part of an intermediate translocation complex acting as a protein-conducting channel at the inner envelope. This Lotus japonicus (Lotus corniculatus var. japonicus) protein is Protein TIC 214.